Reading from the N-terminus, the 421-residue chain is Forkhead box protein J1 (421 aa).

Disordered stretches follow at residues 1–32 and 79–110; these read MAES…LDDS and PACL…PPPD. The segment covering 11 to 21 has biased composition (gly residues); the sequence is AGPGEEAGPEG. Positions 90–99 are enriched in polar residues; the sequence is KPTSSCTSRS. A DNA-binding region (fork-head) is located at residues 120–210; sequence VKPPYSYATL…YAERLLSGAF (91 aa). A disordered region spans residues 256–277; the sequence is EATGEGGWGTGEGRLGHKRKQP. Positions 259 to 268 are enriched in gly residues; sequence GEGGWGTGEG.

This sequence belongs to the FOXJ1 family. In terms of tissue distribution, pulmonary epithelium, testis and oviduct.

Its subcellular location is the nucleus. In terms of biological role, transcription factor specifically required for the formation of motile cilia. Acts by activating transcription of genes that mediate assembly of motile cilia, such as CFAP157. Binds the DNA consensus sequences 5'-HWDTGTTTGTTTA-3' or 5'-KTTTGTTGTTKTW-3' (where H is not G, W is A or T, D is not C, and K is G or T). Activates the transcription of a variety of ciliary proteins in the developing brain and lung. This is Forkhead box protein J1 (Foxj1) from Rattus norvegicus (Rat).